Here is a 755-residue protein sequence, read N- to C-terminus: MRSVTSFNDSWVFSEASTRDAERSGRVSRSACRTNAVELPFNYFDERCYQRAFTYQRVLAWRPDFSQGSRSSSTRQWPMRSCISTAKRSSRIRDGYTPFEARLTDRLLEGDNLITVKIDGSENPEIPPFGAGIDYLTYAGIYRDVWLKVTDPVSIANIKIETRDVLSDHKAVSLRCDLSNPQGLSFSGTISALLKNAAGEVLAEVAGETTGQSLAFEMDGLRGLSLWDIDDPVLYVIEVELRTGQGFRLLRRAFRLPHGEFTTEGFRLNGRPLKIRGLNRHQSFPYVGLRMGRTAKGSAHADIMNAHRLHCNLVRTSHYPQSKWFLDHCDRIGLLVFARNPRLAAYRWGGMETGGNPERPPHRSSATGTTRLSYIWGVRINESQDSHDFYAETNRLARELDPTRQTGGVRYITDSEFLEDVYTMNDFILGNEELPGANRPGTALRPQQECTGLPRKVPYLITEFGGHMYPTKIYDQEQRQAEHVRRHLEVLNAAYARNPGISGAIGWCMFDYNTTRISAPATGSAITASWTCSASPKFAAYVYASQCDPSEEIVMKPVTFWARGDDDIGGVLPLIVLTNCDEIELKYGSLTKRVGPDRENFPHLPHPPVVIDHRHFTKDELGVWGMKWESAEFTGFIAGKPVADLRMAADPVPTTLQVEADSKTLRREGRDTVRLILRALDQAGNVLPFLNDAVDIEIHGPARLVGPARIVLQGGSGFLAGVHGRRRHASSRSRRRGSAAAKLDLVALADGAASA.

E382 (proton donor) is an active-site residue. E463 serves as the catalytic Nucleophile.

It belongs to the glycosyl hydrolase 2 family.

It carries out the reaction Hydrolysis of terminal non-reducing beta-D-galactose residues in beta-D-galactosides.. The polypeptide is Beta-galactosidase (lacZ) (Rhizobium meliloti (Ensifer meliloti)).